The chain runs to 98 residues: Large ribosomal subunit protein uL23 (98 aa).

It belongs to the universal ribosomal protein uL23 family. Part of the 50S ribosomal subunit. Contacts protein L29, and trigger factor when it is bound to the ribosome.

In terms of biological role, one of the early assembly proteins it binds 23S rRNA. One of the proteins that surrounds the polypeptide exit tunnel on the outside of the ribosome. Forms the main docking site for trigger factor binding to the ribosome. This chain is Large ribosomal subunit protein uL23, found in Thioalkalivibrio sulfidiphilus (strain HL-EbGR7).